Here is a 133-residue protein sequence, read N- to C-terminus: Putative actin-depolymerizing factor 11 (133 aa).

In terms of domain architecture, ADF-H spans 1–133 (MVLHDDCKLT…SLDAIRRRIN (133 aa)).

Belongs to the actin-binding proteins ADF family.

The protein resides in the cytoplasm. The protein localises to the cytoskeleton. Actin-depolymerizing protein. Severs actin filaments (F-actin) and binds to actin monomers. The polypeptide is Putative actin-depolymerizing factor 11 (ADF11) (Arabidopsis thaliana (Mouse-ear cress)).